A 550-amino-acid chain; its full sequence is Hydroxylamine reductase (550 aa).

[2Fe-2S] cluster contacts are provided by Cys-3, Cys-6, Cys-18, and Cys-25. The hybrid [4Fe-2O-2S] cluster site is built by His-249, Glu-273, Cys-317, Cys-405, Cys-433, Cys-458, Glu-492, and Lys-494. Residue Cys-405 is modified to Cysteine persulfide.

This sequence belongs to the HCP family. The cofactor is [2Fe-2S] cluster. Requires hybrid [4Fe-2O-2S] cluster as cofactor.

The protein resides in the cytoplasm. It catalyses the reaction A + NH4(+) + H2O = hydroxylamine + AH2 + H(+). Catalyzes the reduction of hydroxylamine to form NH(3) and H(2)O. This chain is Hydroxylamine reductase, found in Enterobacter sp. (strain 638).